Consider the following 448-residue polypeptide: tRNA modification GTPase MnmE (448 aa).

Arginine 25, glutamate 82, and lysine 121 together coordinate (6S)-5-formyl-5,6,7,8-tetrahydrofolate. One can recognise a TrmE-type G domain in the interval 217–372; sequence GLTTVIAGRP…LRQEIIRRAG (156 aa). Asparagine 227 provides a ligand contact to K(+). Residues 227–232, 246–252, 271–274, and 353–355 each bind GTP; these read NVGKSS, TEIPGTT, DTAG, and SAR. Serine 231 lines the Mg(2+) pocket. The K(+) site is built by threonine 246, isoleucine 248, and threonine 251. Threonine 252 provides a ligand contact to Mg(2+). Lysine 448 is a (6S)-5-formyl-5,6,7,8-tetrahydrofolate binding site.

Belongs to the TRAFAC class TrmE-Era-EngA-EngB-Septin-like GTPase superfamily. TrmE GTPase family. In terms of assembly, homodimer. Heterotetramer of two MnmE and two MnmG subunits. It depends on K(+) as a cofactor.

The protein resides in the cytoplasm. Functionally, exhibits a very high intrinsic GTPase hydrolysis rate. Involved in the addition of a carboxymethylaminomethyl (cmnm) group at the wobble position (U34) of certain tRNAs, forming tRNA-cmnm(5)s(2)U34. The protein is tRNA modification GTPase MnmE of Methylococcus capsulatus (strain ATCC 33009 / NCIMB 11132 / Bath).